Here is a 141-residue protein sequence, read N- to C-terminus: Phosphoribosyl-AMP cyclohydrolase (141 aa).

Aspartate 88 is a Mg(2+) binding site. Cysteine 89 provides a ligand contact to Zn(2+). Residues aspartate 90 and aspartate 92 each coordinate Mg(2+). Cysteine 109 and cysteine 116 together coordinate Zn(2+).

The protein belongs to the PRA-CH family. Homodimer. Mg(2+) serves as cofactor. Zn(2+) is required as a cofactor.

The protein localises to the cytoplasm. The catalysed reaction is 1-(5-phospho-beta-D-ribosyl)-5'-AMP + H2O = 1-(5-phospho-beta-D-ribosyl)-5-[(5-phospho-beta-D-ribosylamino)methylideneamino]imidazole-4-carboxamide. The protein operates within amino-acid biosynthesis; L-histidine biosynthesis; L-histidine from 5-phospho-alpha-D-ribose 1-diphosphate: step 3/9. Its function is as follows. Catalyzes the hydrolysis of the adenine ring of phosphoribosyl-AMP. This Paracidovorax citrulli (strain AAC00-1) (Acidovorax citrulli) protein is Phosphoribosyl-AMP cyclohydrolase.